Consider the following 78-residue polypeptide: Acyl carrier protein (78 aa).

Positions 2–77 (STIEERVKKI…AAIDYVNSHK (76 aa)) constitute a Carrier domain. Residue Ser-37 is modified to O-(pantetheine 4'-phosphoryl)serine.

Belongs to the acyl carrier protein (ACP) family. 4'-phosphopantetheine is transferred from CoA to a specific serine of apo-ACP by AcpS. This modification is essential for activity because fatty acids are bound in thioester linkage to the sulfhydryl of the prosthetic group.

The protein resides in the cytoplasm. Its pathway is lipid metabolism; fatty acid biosynthesis. Its function is as follows. Carrier of the growing fatty acid chain in fatty acid biosynthesis. This is Acyl carrier protein from Pseudomonas putida (strain GB-1).